Reading from the N-terminus, the 629-residue chain is Aspartate--tRNA(Asp/Asn) ligase (629 aa).

Residues 1–24 (MERSSRADLISEDSHPARTHTCGD) form a disordered region. The segment covering 12 to 24 (EDSHPARTHTCGD) has biased composition (basic and acidic residues). Glu-194 lines the L-aspartate pocket. Residues 218–221 (QTYK) are aspartate. Arg-240 serves as a coordination point for L-aspartate. ATP is bound by residues 240 to 242 (RDE) and Gln-249. Residue His-474 participates in L-aspartate binding. Position 508 (Glu-508) interacts with ATP. Arg-515 is an L-aspartate binding site. 560–563 (GLDR) is a binding site for ATP.

Belongs to the class-II aminoacyl-tRNA synthetase family. Type 1 subfamily. In terms of assembly, homodimer.

Its subcellular location is the cytoplasm. The catalysed reaction is tRNA(Asx) + L-aspartate + ATP = L-aspartyl-tRNA(Asx) + AMP + diphosphate. In terms of biological role, aspartyl-tRNA synthetase with relaxed tRNA specificity since it is able to aspartylate not only its cognate tRNA(Asp) but also tRNA(Asn). Reaction proceeds in two steps: L-aspartate is first activated by ATP to form Asp-AMP and then transferred to the acceptor end of tRNA(Asp/Asn). This chain is Aspartate--tRNA(Asp/Asn) ligase, found in Salinibacter ruber (strain DSM 13855 / M31).